A 153-amino-acid polypeptide reads, in one-letter code: Ribosomal RNA large subunit methyltransferase H (153 aa).

Leu-71 and Gly-102 together coordinate S-adenosyl-L-methionine.

Belongs to the RNA methyltransferase RlmH family. As to quaternary structure, homodimer.

It is found in the cytoplasm. It carries out the reaction pseudouridine(1915) in 23S rRNA + S-adenosyl-L-methionine = N(3)-methylpseudouridine(1915) in 23S rRNA + S-adenosyl-L-homocysteine + H(+). Its function is as follows. Specifically methylates the pseudouridine at position 1915 (m3Psi1915) in 23S rRNA. This chain is Ribosomal RNA large subunit methyltransferase H, found in Anaeromyxobacter dehalogenans (strain 2CP-C).